Reading from the N-terminus, the 229-residue chain is Putative germin-like protein 12-4 (229 aa).

A signal peptide spans 1–22 (MAASNFFLLTAFIALVATQAMA). A disulfide bridge connects residues C32 and C47. In terms of domain architecture, Cupin type-1 spans 62 to 217 (ANLDKPMDTT…AFQVDKKAMD (156 aa)). A glycan (N-linked (GlcNAc...) asparagine) is linked at N78. 4 residues coordinate Mn(2+): H111, H113, E118, and H162.

This sequence belongs to the germin family. In terms of assembly, oligomer (believed to be a pentamer but probably hexamer).

The protein localises to the secreted. It is found in the extracellular space. The protein resides in the apoplast. May play a role in plant defense. Probably has no oxalate oxidase activity even if the active site is conserved. This is Putative germin-like protein 12-4 from Oryza sativa subsp. japonica (Rice).